The chain runs to 70 residues: ATP synthase subunit epsilon, mitochondrial (70 aa).

This sequence belongs to the eukaryotic ATPase epsilon family. In terms of assembly, F-type ATPases have 2 components, CF(1) - the catalytic core - and CF(0) - the membrane proton channel. CF(1) has five subunits: alpha(3), beta(3), gamma(1), delta(1), epsilon(1). CF(0) has three main subunits: a, b and c.

The protein resides in the mitochondrion. Its subcellular location is the mitochondrion inner membrane. Functionally, mitochondrial membrane ATP synthase (F(1)F(0) ATP synthase or Complex V) produces ATP from ADP in the presence of a proton gradient across the membrane which is generated by electron transport complexes of the respiratory chain. F-type ATPases consist of two structural domains, F(1) - containing the extramembraneous catalytic core, and F(0) - containing the membrane proton channel, linked together by a central stalk and a peripheral stalk. During catalysis, ATP synthesis in the catalytic domain of F(1) is coupled via a rotary mechanism of the central stalk subunits to proton translocation. Part of the complex F(1) domain and of the central stalk which is part of the complex rotary element. Rotation of the central stalk against the surrounding alpha(3)beta(3) subunits leads to hydrolysis of ATP in three separate catalytic sites on the beta subunits. The chain is ATP synthase subunit epsilon, mitochondrial from Zea mays (Maize).